Reading from the N-terminus, the 428-residue chain is Secernin-2 (428 aa).

Cys-10 is an active-site residue.

This sequence belongs to the peptidase C69 family. Secernin subfamily.

This is Secernin-2 (scrn2) from Xenopus laevis (African clawed frog).